Reading from the N-terminus, the 334-residue chain is tRNA uridine(34) hydroxylase (334 aa).

The 95-residue stretch at 123–217 folds into the Rhodanese domain; the sequence is SDPDVILVDT…YLEEVKAEES (95 aa). Cys-177 (cysteine persulfide intermediate) is an active-site residue.

This sequence belongs to the TrhO family.

It carries out the reaction uridine(34) in tRNA + AH2 + O2 = 5-hydroxyuridine(34) in tRNA + A + H2O. Catalyzes oxygen-dependent 5-hydroxyuridine (ho5U) modification at position 34 in tRNAs. The sequence is that of tRNA uridine(34) hydroxylase from Shewanella baltica (strain OS195).